Reading from the N-terminus, the 910-residue chain is Putative coatomer subunit beta'-3 (910 aa).

9 WD repeats span residues 13–52 (QRSERAKSVDLHPTEPWILSSLYSGSVCIWNYQTQTMVKS), 55–94 (VTELPVRSSKFITRKQWVVAGADDMFIRVYNYNTMDKVKV), 97–136 (AHTDYIRCVAVHPTQPFVLSSSDDMLIKLWDWDKGWMCTQ), 140–180 (GHSH…PNFT), 183–224 (GHSK…CVQT), 227–266 (GHAHNVSAVCFHPELPIILTGSEDGTVRLWHSTTYRLENT), 269–309 (YGLE…ASMD), 351–393 (TCDL…GSAL), and 461–501 (RIDV…SHLD). The span at 865–884 (ENGVEESQEDAVEVDVEADG) shows a compositional bias: acidic residues. Residues 865–910 (ENGVEESQEDAVEVDVEADGSTDGTVLVNGNDTEEQWGTNNEESLA) form a disordered region. Polar residues predominate over residues 886–910 (TDGTVLVNGNDTEEQWGTNNEESLA).

This sequence belongs to the WD repeat COPB2 family. Oligomeric complex that consists of at least the alpha, beta, beta', gamma, delta, epsilon and zeta subunits.

It localises to the cytoplasm. Its subcellular location is the golgi apparatus membrane. The protein localises to the cytoplasmic vesicle. It is found in the COPI-coated vesicle membrane. In terms of biological role, the coatomer is a cytosolic protein complex that binds to dilysine motifs and reversibly associates with Golgi non-clathrin-coated vesicles, which further mediate biosynthetic protein transport from the ER, via the Golgi up to the trans Golgi network. Coatomer complex is required for budding from Golgi membranes, and is essential for the retrograde Golgi-to-ER transport of dilysine-tagged proteins. The protein is Putative coatomer subunit beta'-3 of Oryza sativa subsp. japonica (Rice).